A 267-amino-acid polypeptide reads, in one-letter code: Hydroxyethylthiazole kinase (267 aa).

Met42 is a substrate binding site. ATP contacts are provided by Cys118 and Thr162. Position 189 (Gly189) interacts with substrate.

It belongs to the Thz kinase family. Mg(2+) serves as cofactor.

It carries out the reaction 5-(2-hydroxyethyl)-4-methylthiazole + ATP = 4-methyl-5-(2-phosphooxyethyl)-thiazole + ADP + H(+). It functions in the pathway cofactor biosynthesis; thiamine diphosphate biosynthesis; 4-methyl-5-(2-phosphoethyl)-thiazole from 5-(2-hydroxyethyl)-4-methylthiazole: step 1/1. Its function is as follows. Catalyzes the phosphorylation of the hydroxyl group of 4-methyl-5-beta-hydroxyethylthiazole (THZ). The chain is Hydroxyethylthiazole kinase from Rubrobacter xylanophilus (strain DSM 9941 / JCM 11954 / NBRC 16129 / PRD-1).